Consider the following 603-residue polypeptide: Polypeptide N-acetylgalactosaminyltransferase 9 (603 aa).

Over 1–6 the chain is Cytoplasmic; that stretch reads MAVARK. Residues 7-29 traverse the membrane as a helical; Signal-anchor for type II membrane protein segment; it reads IRTLLTVNILVFVGIVLFSVYCR. Topologically, residues 30–603 are lumenal; that stretch reads LQGRSQELVR…IRNWIKHARH (574 aa). 2 cysteine pairs are disulfide-bonded: Cys-141–Cys-372 and Cys-363–Cys-442. Residues 150 to 261 are catalytic subdomain A; the sequence is LPQVSVVFIF…TGWAEPALSR (112 aa). Substrate is bound by residues Asp-191 and Arg-222. Mn(2+) is bound by residues Asp-245, His-247, and His-377. Residues 318–380 form a catalytic subdomain B region; sequence PIRTPAMIGC…PCSRVAHIER (63 aa). The substrate site is built by Arg-380 and Tyr-385. The N-linked (GlcNAc...) asparagine glycan is linked to Asn-460. In terms of domain architecture, Ricin B-type lectin spans 464 to 600; sequence TYGEVRNSKA…KWMIRNWIKH (137 aa). Cystine bridges form between Cys-477/Cys-493, Cys-525/Cys-540, and Cys-567/Cys-587.

It belongs to the glycosyltransferase 2 family. GalNAc-T subfamily. Mn(2+) serves as cofactor. Specifically expressed in brain. Not expressed in heart, placenta, lung, liver, skeletal muscle, kidney, pancreas, spleen, thymus, prostate, testis, ovary, small intestine, colon and leukocyte. In brain, it is expressed in cerebellum, frontal lobe, temporal lobe, putamen and spinal cord, weakly expressed in cerebral cortex. Not expressed in medulla and occipital pole.

It localises to the golgi apparatus membrane. It catalyses the reaction L-seryl-[protein] + UDP-N-acetyl-alpha-D-galactosamine = a 3-O-[N-acetyl-alpha-D-galactosaminyl]-L-seryl-[protein] + UDP + H(+). The enzyme catalyses L-threonyl-[protein] + UDP-N-acetyl-alpha-D-galactosamine = a 3-O-[N-acetyl-alpha-D-galactosaminyl]-L-threonyl-[protein] + UDP + H(+). It participates in protein modification; protein glycosylation. In terms of biological role, catalyzes the initial reaction in O-linked oligosaccharide biosynthesis, the transfer of an N-acetyl-D-galactosamine residue to a serine or threonine residue on the protein receptor. Does not glycosylate apomucin or SDC3. The polypeptide is Polypeptide N-acetylgalactosaminyltransferase 9 (GALNT9) (Homo sapiens (Human)).